A 616-amino-acid chain; its full sequence is Probable Xaa-Pro aminopeptidase P (616 aa).

Residues Asp-413, Asp-424, Glu-522, and Glu-536 each contribute to the Mn(2+) site.

It belongs to the peptidase M24B family. Mn(2+) serves as cofactor.

The enzyme catalyses Release of any N-terminal amino acid, including proline, that is linked to proline, even from a dipeptide or tripeptide.. Its function is as follows. Catalyzes the removal of a penultimate prolyl residue from the N-termini of peptides. In Paracoccidioides lutzii (strain ATCC MYA-826 / Pb01) (Paracoccidioides brasiliensis), this protein is Probable Xaa-Pro aminopeptidase P (AMPP).